We begin with the raw amino-acid sequence, 315 residues long: Malate dehydrogenase (315 aa).

NAD(+)-binding positions include 11 to 16 (GAGHVG) and Asp35. Positions 84 and 90 each coordinate substrate. Residues Asn97 and 120-122 (VTN) contribute to the NAD(+) site. 2 residues coordinate substrate: Asn122 and Arg153. His177 acts as the Proton acceptor in catalysis.

This sequence belongs to the LDH/MDH superfamily. MDH type 3 family.

The enzyme catalyses (S)-malate + NAD(+) = oxaloacetate + NADH + H(+). In terms of biological role, catalyzes the reversible oxidation of malate to oxaloacetate. The polypeptide is Malate dehydrogenase (Thermosulfidibacter takaii (strain DSM 17441 / JCM 13301 / NBRC 103674 / ABI70S6)).